A 310-amino-acid polypeptide reads, in one-letter code: Protoheme IX farnesyltransferase (310 aa).

The next 9 membrane-spanning stretches (helical) occupy residues 37-57 (LITVFAGYVVAASYLTDDVLL), 64-84 (LTLLWTLLGSGLVIAGSCYLN), 113-133 (ILALGLGILATGTVLLLIVNH), 134-154 (VAAVFGLIGSFVYVVIYTMWL), 159-181 (TINTVVGGISGAVPPIIGFAAVT), 186-208 (IDAWILFLIMFVWQPPHFLALAM), 215-237 (RAAGIPMLPVVNGFAITKRQIVW), 257-277 (MLVMAVLGGYWLYMGLKGLKI), and 290-310 (MFFFSLFYFTAWIVTVVLVSL).

The protein belongs to the UbiA prenyltransferase family. Protoheme IX farnesyltransferase subfamily. Interacts with CtaA.

It localises to the cell membrane. It catalyses the reaction heme b + (2E,6E)-farnesyl diphosphate + H2O = Fe(II)-heme o + diphosphate. It functions in the pathway porphyrin-containing compound metabolism; heme O biosynthesis; heme O from protoheme: step 1/1. In terms of biological role, converts heme B (protoheme IX) to heme O by substitution of the vinyl group on carbon 2 of heme B porphyrin ring with a hydroxyethyl farnesyl side group. This is Protoheme IX farnesyltransferase from Exiguobacterium sibiricum (strain DSM 17290 / CCUG 55495 / CIP 109462 / JCM 13490 / 255-15).